The primary structure comprises 227 residues: GFP-like non-fluorescent chromoprotein (227 aa).

The 5-imidazolinone (Ala-Gly) cross-link spans 63 to 65 (AYG). 2,3-didehydrotyrosine is present on Y64.

The protein belongs to the GFP family. In terms of assembly, homotetramer. Post-translationally, contains a chromophore consisting of modified amino acid residues. The chromophore is formed by autocatalytic backbone condensation between Xaa-N and Gly-(N+2), and oxidation of Tyr-(N+1) to didehydrotyrosine. Maturation of the chromophore requires nothing other than molecular oxygen. The precise stereochemistry of the tyrosine has not been determined.

In terms of biological role, non-fluorescent pigment protein that is mauve in color. The wild-type form is non-fluorescent. The polypeptide is GFP-like non-fluorescent chromoprotein (Condylactis gigantea (Giant Caribbean anemone)).